The sequence spans 195 residues: Cbp/p300-interacting transactivator 1 (195 aa).

Disordered stretches follow at residues 1 to 24 and 51 to 149; these read MPTM…NANP and ASNG…SPAI. Residues 54 to 78 show a composition bias toward low complexity; the sequence is GTKASGAPTSSSGSPSPISSSTATP. Polar residues predominate over residues 97–106; the sequence is MQLQKLNSQY. Residues 137-148 show a composition bias toward low complexity; that stretch reads SLSPSAGAQSPA. The Nuclear export signal signature appears at 160–169; that stretch reads LMSLVVELGL.

The protein belongs to the CITED family. Interacts (via C-terminus) with CREBBP. Interacts with EGR2. Homodimer. Binds to RBM14. Interacts (via N-terminus) with HSPA8; the interaction suppresses the association of CITED1 with p300/CBP and SMAD-mediated transcription transactivation. Interacts (via C-terminus) with TOX3 (via HGM box); the interaction increases estrogen-response element (ERE)-dependent transcription and protection against cell death. Interacts with ESR1; the interaction occurs in a estrogen-dependent manner. Interacts (unphosphorylated form preferentially and via C-terminus) with EP300. Post-translationally, phosphorylated. Phosphorylation changes in a cell cycle-dependent manner and reduces its transcriptional cofactor activity.

It is found in the nucleus. The protein resides in the cytoplasm. Its function is as follows. Transcriptional coactivator of the p300/CBP-mediated transcription complex. Enhances SMAD-mediated transcription by strengthening the functional link between the DNA-binding SMAD transcription factors and the p300/CBP transcription coactivator complex. Stimulates estrogen-dependent transactivation activity mediated by estrogen receptors signaling; stabilizes the interaction of estrogen receptor ESR1 and histone acetyltransferase EP300. Positively regulates TGF-beta signaling through its association with the SMAD/p300/CBP-mediated transcriptional coactivator complex. Induces transcription from estrogen-responsive promoters and protection against cell death. Potentiates EGR2-mediated transcriptional activation activity from the ERBB2 promoter. Acts as an inhibitor of osteoblastic mineralization through a cAMP-dependent parathyroid hormone receptor signaling. May play a role in pigmentation of melanocytes. Associates with chromatin to the estrogen-responsive TGF-alpha promoter region in a estrogen-dependent manner. This Bos taurus (Bovine) protein is Cbp/p300-interacting transactivator 1 (CITED1).